We begin with the raw amino-acid sequence, 485 residues long: Alginate biosynthesis protein AlgA (485 aa).

This sequence belongs to the mannose-6-phosphate isomerase type 2 family. As to quaternary structure, monomer. Co(2+) is required as a cofactor.

It carries out the reaction D-mannose 6-phosphate = D-fructose 6-phosphate. The catalysed reaction is alpha-D-mannose 1-phosphate + GTP + H(+) = GDP-alpha-D-mannose + diphosphate. The protein operates within nucleotide-sugar biosynthesis; GDP-alpha-D-mannose biosynthesis; GDP-alpha-D-mannose from alpha-D-mannose 1-phosphate (GTP route): step 1/1. It functions in the pathway nucleotide-sugar biosynthesis; GDP-alpha-D-mannose biosynthesis; alpha-D-mannose 1-phosphate from D-fructose 6-phosphate: step 1/2. Its function is as follows. Produces a precursor for alginate polymerization. The alginate layer provides a protective barrier against host immune defenses and antibiotics. The chain is Alginate biosynthesis protein AlgA (algA) from Pseudomonas putida (strain ATCC 47054 / DSM 6125 / CFBP 8728 / NCIMB 11950 / KT2440).